The following is a 261-amino-acid chain: Chloroplastic import inner membrane translocase subunit HP30-1 (261 aa).

The next 4 membrane-spanning stretches (helical) occupy residues 59–77 (AAVV…GGLM), 113–129 (NFAA…SVMK), 139–155 (SAVV…SLVS), and 163–180 (MNAI…GVFF).

The protein belongs to the Tim17/Tim22/Tim23 family. In terms of assembly, probable component of a protein-conducting channel made of HP30-1, HP30-2 and HP20 that mediates the import of transit sequence-less proteins into the chloroplastic inner membrane. Interacts with CEQORH.

The protein localises to the plastid. It localises to the chloroplast inner membrane. Its function is as follows. Together with HP30-2 and HP20, triggers the import and insertion of transit sequence-less multi-pass transmembrane proteins (e.g. CEQORH) into the chloroplastic inner membrane. The polypeptide is Chloroplastic import inner membrane translocase subunit HP30-1 (Arabidopsis thaliana (Mouse-ear cress)).